Here is a 290-residue protein sequence, read N- to C-terminus: 4-hydroxybenzoate octaprenyltransferase (290 aa).

A run of 6 helical transmembrane segments spans residues 41–61 (WPLL…GCAM), 89–109 (WEAV…IQPL), 133–153 (FFAI…PMAF), 158–178 (DTVP…SVAY), 202–224 (FGRF…YVWI), and 269–289 (WLGG…GTAG).

It belongs to the UbiA prenyltransferase family. Mg(2+) serves as cofactor.

Its subcellular location is the cell inner membrane. It catalyses the reaction all-trans-octaprenyl diphosphate + 4-hydroxybenzoate = 4-hydroxy-3-(all-trans-octaprenyl)benzoate + diphosphate. Its pathway is cofactor biosynthesis; ubiquinone biosynthesis. Catalyzes the prenylation of para-hydroxybenzoate (PHB) with an all-trans polyprenyl group. Mediates the second step in the final reaction sequence of ubiquinone-8 (UQ-8) biosynthesis, which is the condensation of the polyisoprenoid side chain with PHB, generating the first membrane-bound Q intermediate 3-octaprenyl-4-hydroxybenzoate. This Burkholderia ambifaria (strain MC40-6) protein is 4-hydroxybenzoate octaprenyltransferase.